We begin with the raw amino-acid sequence, 342 residues long: Heat-inducible transcription repressor HrcA (342 aa).

Belongs to the HrcA family.

In terms of biological role, negative regulator of class I heat shock genes (grpE-dnaK-dnaJ and groELS operons). Prevents heat-shock induction of these operons. This chain is Heat-inducible transcription repressor HrcA, found in Mesoplasma florum (strain ATCC 33453 / NBRC 100688 / NCTC 11704 / L1) (Acholeplasma florum).